The primary structure comprises 540 residues: Ubiquitin carboxyl-terminal hydrolase 17-like protein E (540 aa).

A disordered region spans residues 1–22; that stretch reads MVVSLSFPEETGGENLPSAPLE. The USP domain maps to 85–382; the sequence is CGLQNTGNSC…NAYVLFYVQQ (298 aa). C94 (nucleophile) is an active-site residue. H341 functions as the Proton acceptor in the catalytic mechanism. Composition is skewed to basic and acidic residues over residues 431–441 and 508–520; these read NREKRAKKETS and APDKENQPWHNGD. 2 disordered regions span residues 431 to 461 and 499 to 540; these read NREKRAKKETSLGEGKVPQEVNHEKAGQKHG and RSTA…QGGR. Positions 523–540 are enriched in polar residues; it reads LTSQGLMSPGQLCSQGGR.

This sequence belongs to the peptidase C19 family. USP17 subfamily. Interacts with SUDS3; the interaction is direct.

It localises to the nucleus. The protein resides in the endoplasmic reticulum. The enzyme catalyses Thiol-dependent hydrolysis of ester, thioester, amide, peptide and isopeptide bonds formed by the C-terminal Gly of ubiquitin (a 76-residue protein attached to proteins as an intracellular targeting signal).. Deubiquitinating enzyme that removes conjugated ubiquitin from specific proteins to regulate different cellular processes that may include cell proliferation, progression through the cell cycle, apoptosis, cell migration, and the cellular response to viral infection. This is Ubiquitin carboxyl-terminal hydrolase 17-like protein E (Usp17le) from Mus musculus (Mouse).